The following is a 268-amino-acid chain: Testis-specific serine/threonine-protein kinase 3 (268 aa).

Positions 10 to 265 (YQLGKTIGEG…IEEVSWHPWL (256 aa)) constitute a Protein kinase domain. ATP is bound by residues 16–24 (IGEGTYSKV) and K39. D134 (proton acceptor) is an active-site residue. S166 is modified (phosphoserine). T168 is subject to Phosphothreonine.

The protein belongs to the protein kinase superfamily. CAMK Ser/Thr protein kinase family. Mg(2+) is required as a cofactor. Requires Mn(2+) as cofactor. Autophosphorylated at Ser-166. Phosphorylation at Thr-168 by PDPK1 activates the serine/threonine protein kinase activity.

Its subcellular location is the cell projection. The protein localises to the cilium. It is found in the flagellum. The catalysed reaction is L-seryl-[protein] + ATP = O-phospho-L-seryl-[protein] + ADP + H(+). It carries out the reaction L-threonyl-[protein] + ATP = O-phospho-L-threonyl-[protein] + ADP + H(+). Its activity is regulated as follows. Activated by phosphorylation on Thr-168 by PDPK1. Its function is as follows. Serine/threonine protein kinase required for spermatid development and male fertility. This chain is Testis-specific serine/threonine-protein kinase 3, found in Homo sapiens (Human).